We begin with the raw amino-acid sequence, 282 residues long: Bifunctional protein FolD (282 aa).

NADP(+) contacts are provided by residues 165-167 and isoleucine 231; that span reads GAS.

The protein belongs to the tetrahydrofolate dehydrogenase/cyclohydrolase family. As to quaternary structure, homodimer.

It catalyses the reaction (6R)-5,10-methylene-5,6,7,8-tetrahydrofolate + NADP(+) = (6R)-5,10-methenyltetrahydrofolate + NADPH. The catalysed reaction is (6R)-5,10-methenyltetrahydrofolate + H2O = (6R)-10-formyltetrahydrofolate + H(+). The protein operates within one-carbon metabolism; tetrahydrofolate interconversion. In terms of biological role, catalyzes the oxidation of 5,10-methylenetetrahydrofolate to 5,10-methenyltetrahydrofolate and then the hydrolysis of 5,10-methenyltetrahydrofolate to 10-formyltetrahydrofolate. The protein is Bifunctional protein FolD of Francisella tularensis subsp. holarctica (strain FTNF002-00 / FTA).